Consider the following 172-residue polypeptide: uncharacterized protein (172 aa).

Residues 1-148 enclose the Ferritin-like diiron domain; it reads MANSQKVIDV…TIHDFFENGN (148 aa).

This is an uncharacterized protein from Ureaplasma urealyticum (Ureaplasma urealyticum biotype 2).